The primary structure comprises 143 residues: Transcription antitermination protein NusB (143 aa).

It belongs to the NusB family.

Involved in transcription antitermination. Required for transcription of ribosomal RNA (rRNA) genes. Binds specifically to the boxA antiterminator sequence of the ribosomal RNA (rrn) operons. This chain is Transcription antitermination protein NusB, found in Methylacidiphilum infernorum (isolate V4) (Methylokorus infernorum (strain V4)).